A 336-amino-acid polypeptide reads, in one-letter code: Glycerol-3-phosphate dehydrogenase [NAD(P)+] (336 aa).

The NADPH site is built by S11, W12, R33, R34, and K107. Sn-glycerol 3-phosphate-binding residues include K107 and G137. A141 serves as a coordination point for NADPH. Residues K192, D245, S255, R256, and N257 each coordinate sn-glycerol 3-phosphate. K192 acts as the Proton acceptor in catalysis. R256 provides a ligand contact to NADPH. E282 serves as a coordination point for NADPH.

Belongs to the NAD-dependent glycerol-3-phosphate dehydrogenase family.

It is found in the cytoplasm. It carries out the reaction sn-glycerol 3-phosphate + NAD(+) = dihydroxyacetone phosphate + NADH + H(+). It catalyses the reaction sn-glycerol 3-phosphate + NADP(+) = dihydroxyacetone phosphate + NADPH + H(+). It participates in membrane lipid metabolism; glycerophospholipid metabolism. In terms of biological role, catalyzes the reduction of the glycolytic intermediate dihydroxyacetone phosphate (DHAP) to sn-glycerol 3-phosphate (G3P), the key precursor for phospholipid synthesis. This chain is Glycerol-3-phosphate dehydrogenase [NAD(P)+], found in Thermobifida fusca (strain YX).